Reading from the N-terminus, the 161-residue chain is Small ribosomal subunit protein uS19 (161 aa).

A compositionally biased stretch (basic residues) spans 1 to 19; the sequence is MARQKKYSGKGGARKKNKQ. Residues 1-26 form a disordered region; it reads MARQKKYSGKGGARKKNKQKQNVAPR.

It belongs to the universal ribosomal protein uS19 family.

Its function is as follows. Protein S19 forms a complex with S13 that binds strongly to the 16S ribosomal RNA. The sequence is that of Small ribosomal subunit protein uS19 from Methanococcus maripaludis (strain DSM 14266 / JCM 13030 / NBRC 101832 / S2 / LL).